The primary structure comprises 126 residues: Probable small nuclear ribonucleoprotein Sm D1 (126 aa).

One can recognise a Sm domain in the interval 2 to 74 (KLVRFLMKLS…IRYIILPDPL (73 aa)). The tract at residues 86–126 (RKKARAARAGASRGRGRGGMRGGRGGRGRGRGGPRGGGPRR) is disordered. Residues 99 to 126 (GRGRGGMRGGRGGRGRGRGGPRGGGPRR) are compositionally biased toward basic residues.

It belongs to the snRNP core protein family.

Its subcellular location is the nucleus. It is found in the cytoplasm. It localises to the cytosol. Functionally, plays a role in pre-mRNA splicing as a core component of the spliceosomal U1, U2, U4 and U5 small nuclear ribonucleoproteins (snRNPs), the building blocks of the spliceosome. The protein is Probable small nuclear ribonucleoprotein Sm D1 (snr-3) of Caenorhabditis elegans.